The sequence spans 334 residues: Protein-methionine-sulfoxide reductase catalytic subunit MsrP (334 aa).

Positions 1–44 form a signal peptide, tat-type signal; that stretch reads MKKNQFLKESDVTAESVFFMKRRQVLKALGISAAALSLPHAAHA. Mo-molybdopterin contacts are provided by residues Asn-88, 91-92, Cys-146, Thr-181, Asn-233, Arg-238, and 249-251; these read YE and GIK.

This sequence belongs to the MsrP family. Heterodimer of a catalytic subunit (MsrP) and a heme-binding subunit (MsrQ). Mo-molybdopterin serves as cofactor. Predicted to be exported by the Tat system. The position of the signal peptide cleavage has not been experimentally proven.

The protein resides in the periplasm. It carries out the reaction L-methionyl-[protein] + a quinone + H2O = L-methionyl-(S)-S-oxide-[protein] + a quinol. The catalysed reaction is L-methionyl-[protein] + a quinone + H2O = L-methionyl-(R)-S-oxide-[protein] + a quinol. Part of the MsrPQ system that repairs oxidized periplasmic proteins containing methionine sulfoxide residues (Met-O), using respiratory chain electrons. Thus protects these proteins from oxidative-stress damage caused by reactive species of oxygen and chlorine generated by the host defense mechanisms. MsrPQ is essential for the maintenance of envelope integrity under bleach stress, rescuing a wide series of structurally unrelated periplasmic proteins from methionine oxidation, including the primary periplasmic chaperone SurA and the lipoprotein Pal. The catalytic subunit MsrP is non-stereospecific, being able to reduce both (R-) and (S-) diastereoisomers of methionine sulfoxide. This is Protein-methionine-sulfoxide reductase catalytic subunit MsrP from Escherichia coli O127:H6 (strain E2348/69 / EPEC).